The chain runs to 370 residues: MANLNQKKYPAKDDFPNFEGHKSLLSKYLTADMYAKLRDVATPSGYTLDRAIQNGVDNPDFHLGLLAGDEETYTVFADLFDPVIEEYHNGFKKTDNHKTDLDASKILDDVLDPAYVISSRVRTGRNIRGMALSPHVCRSERRAIEKMVSEALNSLAADLKGKYYSLMKMDEKTQQQLIDDHFLFDRPVSRHFTSGGMARDFPDGRGIWHNDKKNFLVWINEEDHTRIISMQMGGNMKEVFERFTRGLTEVEKHIKDKTGKEFMKNDHLGFVLTCPSNLGTGVRCSVHAKLPHMAKDKRFEEICTKMRLQKRGTSGEFTESVGGVYDISNLDRLGSSEVEQVNCVIKGVKVLIEMEKKLEKGESIDDLVPK.

A Phosphagen kinase N-terminal domain is found at 6–89 (QKKYPAKDDF…FDPVIEEYHN (84 aa)). The 244-residue stretch at 115 to 358 (YVISSRVRTG…KVLIEMEKKL (244 aa)) folds into the Phosphagen kinase C-terminal domain. ATP-binding positions include 118–122 (SSRVR) and His-181. Glu-222 contacts substrate. Arg-226 is a binding site for ATP. Cys-274 provides a ligand contact to substrate. Residues 283 to 287 (RCSVH) and 311 to 316 (RGTSGE) each bind ATP. Glu-316 lines the substrate pocket.

It belongs to the ATP:guanido phosphotransferase family. As to quaternary structure, homodimer. In terms of processing, the N-terminus is blocked.

The enzyme catalyses L-arginine + ATP = N(omega)-phospho-L-arginine + ADP + H(+). The sequence is that of Arginine kinase (AK) from Stichopus japonicus (Sea cucumber).